A 61-amino-acid chain; its full sequence is Large ribosomal subunit protein eL37 (61 aa).

Residues Cys20, Cys23, Cys35, and Cys38 each coordinate Zn(2+). The segment at 20–38 (CRRCGRRAYHVRKKRCAAC) adopts a C4-type zinc-finger fold.

The protein belongs to the eukaryotic ribosomal protein eL37 family. It depends on Zn(2+) as a cofactor.

Binds to the 23S rRNA. In Methanocaldococcus jannaschii (strain ATCC 43067 / DSM 2661 / JAL-1 / JCM 10045 / NBRC 100440) (Methanococcus jannaschii), this protein is Large ribosomal subunit protein eL37 (rpl37e).